We begin with the raw amino-acid sequence, 375 residues long: Putative disease resistance protein At3g15700 (375 aa).

Residues 17–49 (KENDNVKKLKTATEELKDLRNIVMKRVKMYEDQ) are a coiled coil. An NB-ARC domain is found at 158-372 (DNTGIIGLYG…LSTSPPNFSG (215 aa)). An ATP-binding site is contributed by 167 to 174 (GVEGVGKT).

Functionally, potential disease resistance protein. The protein is Putative disease resistance protein At3g15700 of Arabidopsis thaliana (Mouse-ear cress).